Here is a 219-residue protein sequence, read N- to C-terminus: MOB kinase activator-like 1 (219 aa).

Cys-79, Cys-84, His-161, and His-166 together coordinate Zn(2+).

The protein belongs to the MOB1/phocein family. Interacts with and activates trc and wts. In terms of processing, phosphorylated by wts/mats kinase complex. Activated by phosphorylation by Hippo (Hpo) kinase which increases its affinity and its ability to activate Warts (Wts) kinase. As to expression, ubiquitously expressed at low levels in developing tissues (at protein level).

It is found in the cytoplasm. The protein localises to the cytoskeleton. Its subcellular location is the microtubule organizing center. The protein resides in the centrosome. It localises to the nucleus. It is found in the cytosol. The protein localises to the cell membrane. In terms of biological role, coactivator of Warts (Wts) kinase in the Hippo/SWH (Sav/Wts/Hpo)signaling pathway, a signaling pathway that plays a pivotal role in organ size control and tumor suppression by restricting proliferation and promoting apoptosis. The core of this pathway is composed of a kinase cascade wherein Hippo (Hpo), in complex with its regulatory protein Salvador (Sav), phosphorylates and activates Warts (Wts) in complex with its regulatory protein Mats, which in turn phosphorylates and inactivates the Yorkie (Yki)oncoprotein. The Hippo/SWH signaling pathway inhibits the activity of the transcriptional complex formed by Scalloped (sd) and Yki and the target genes of this pathway include cyclin-E (cycE), diap1 and bantam. Mats is essential for early development and is required for proper chromosomal segregation in developing embryos. In Drosophila melanogaster (Fruit fly), this protein is MOB kinase activator-like 1.